The chain runs to 87 residues: MANSVQATKRARQAEKHRQHNAGMRAAMRTTVKKVLSAVEAGDKEAATAAFRVAQSSLDNMARKGLIAKNKAARNKSRINARIKAMA.

The interval Met-1–Ala-27 is disordered. Residues Lys-9–His-20 show a composition bias toward basic residues.

This sequence belongs to the bacterial ribosomal protein bS20 family.

In terms of biological role, binds directly to 16S ribosomal RNA. The sequence is that of Small ribosomal subunit protein bS20 from Hydrogenovibrio crunogenus (strain DSM 25203 / XCL-2) (Thiomicrospira crunogena).